A 579-amino-acid chain; its full sequence is MSAAIAALAASYGSGSGSESDSDSEGSRCPLPAADSLMHLTKSPSAKLSLTVAVDSAPEVAVKEDLETGVHLDPAVKEVQYNPTYETMFAPEFGPENPFRTQQMAAPRNMLSGYAEPAHINDFMFEQQRRTFATYGYALDPSLDNHQVSAKYIGSVEEAEKNQGLTVFETGQKKTEKRKKFKENDASNIDGFLGPWAKYVDEKDVAKPSEEEQKELDEITAKRQKKGKQEEEKPGEEKTILHVKEMYDYQGRSYLHIPQDVGVNLRSSVPPEKCYLPKKQIHVWSGHTKGVSAVRLFPLSGHLLLSCSMDCKIKLWEVYGDRRCLRTFIGHSKAVRDICFNTAGTQFLSAAYDRYLKLWDTETGQCISRFTNRKVPYCVKFNPDEDKQNLFVAGMSDKKIVQWDIRSGEIVQEYDRHLGAVNTIVFVDENRRFVSTSDDKSLRVWEWDIPVDFKYIAEPSMHSMPAVTLSPNGKWLACQSMDNQILIFGAQNRFRLNKKKIFKGHMVAGYACQVDFSPDMSYVISGDGNGKLNIWDWKTTKLYSRFKAHDKVCIGAVWHPHETSKVITCGWDGLIKLWD.

A compositionally biased stretch (low complexity) spans 1 to 19; the sequence is MSAAIAALAASYGSGSGSE. Disordered regions lie at residues 1–34 and 204–237; these read MSAAIAALAASYGSGSGSESDSDSEGSRCPLPAA and DVAKPSEEEQKELDEITAKRQKKGKQEEEKPGEE. WD repeat units follow at residues 286-326, 330-369, 371-413, 416-455, 459-498, 504-545, and 548-578; these read GHTK…RCLR, GHSKAVRDICFNTAGTQFLSAAYDRYLKLWDTETGQCISR, TNRK…IVQE, RHLGAVNTIVFVDENRRFVSTSDDKSLRVWEWDIPVDFKY, PSMHSMPAVTLSPNGKWLACQSMDNQILIFGAQNRFRLNK, GHMV…LYSR, and AHDKVCIGAVWHPHETSKVITCGWDGLIKLW.

Component of the catalytic spliceosome C complexes. Component of the postcatalytic spliceosome P complex. Interacts with PPIL1; this interaction leads to CDC40 isomerization. Post-translationally, undergoes isomerization of the peptide bond between Gly-94 and Pro-95. The reaction is catalyzed by PPIL1.

The protein resides in the nucleus. It localises to the nucleus speckle. Its function is as follows. Required for pre-mRNA splicing as component of the activated spliceosome. Plays an important role in embryonic brain development; this function does not require proline peptide bond isomerization. This Mus musculus (Mouse) protein is Pre-mRNA-processing factor 17 (Cdc40).